We begin with the raw amino-acid sequence, 252 residues long: uncharacterized protein (252 aa).

Residue 28-35 coordinates ATP; sequence GCDGTGKS.

The protein to E.coli YghS and YghT.

This is an uncharacterized protein from Escherichia coli O6:H1 (strain CFT073 / ATCC 700928 / UPEC).